We begin with the raw amino-acid sequence, 30 residues long: Basic phospholipase A2 CM-I (30 aa).

This sequence belongs to the phospholipase A2 family. Group I subfamily. The cofactor is Ca(2+). Expressed by the venom gland.

Its subcellular location is the secreted. The enzyme catalyses a 1,2-diacyl-sn-glycero-3-phosphocholine + H2O = a 1-acyl-sn-glycero-3-phosphocholine + a fatty acid + H(+). Snake venom phospholipase A2 (PLA2) that shows weak anticoagulant activity. Is more catalytically active than the strong anticoagulant protein CM-IV found in this venom. Acts by inhibiting the complex composed of tissue factor (F3) and coagulation factor VIIa (F7) (TF-VIIa complex) by only enzymatic mechanism. PLA2 catalyzes the calcium-dependent hydrolysis of the 2-acyl groups in 3-sn-phosphoglycerides. In Naja nigricollis (Black-necked spitting cobra), this protein is Basic phospholipase A2 CM-I.